The primary structure comprises 150 residues: Large ribosomal subunit protein bL9 (150 aa).

It belongs to the bacterial ribosomal protein bL9 family.

Its function is as follows. Binds to the 23S rRNA. The chain is Large ribosomal subunit protein bL9 from Leptothrix cholodnii (strain ATCC 51168 / LMG 8142 / SP-6) (Leptothrix discophora (strain SP-6)).